A 111-amino-acid chain; its full sequence is Universal stress protein B (111 aa).

2 consecutive transmembrane segments (helical) span residues 1–21 (MFST…NMMR) and 90–110 (FILT…MLIW).

Belongs to the universal stress protein B family.

It is found in the cell inner membrane. In Photorhabdus laumondii subsp. laumondii (strain DSM 15139 / CIP 105565 / TT01) (Photorhabdus luminescens subsp. laumondii), this protein is Universal stress protein B.